A 258-amino-acid polypeptide reads, in one-letter code: Tryptophan synthase alpha chain (258 aa).

Active-site proton acceptor residues include E47 and D58.

The protein belongs to the TrpA family. As to quaternary structure, tetramer of two alpha and two beta chains.

The catalysed reaction is (1S,2R)-1-C-(indol-3-yl)glycerol 3-phosphate + L-serine = D-glyceraldehyde 3-phosphate + L-tryptophan + H2O. Its pathway is amino-acid biosynthesis; L-tryptophan biosynthesis; L-tryptophan from chorismate: step 5/5. Its function is as follows. The alpha subunit is responsible for the aldol cleavage of indoleglycerol phosphate to indole and glyceraldehyde 3-phosphate. This chain is Tryptophan synthase alpha chain, found in Bacillus cereus (strain B4264).